The following is a 459-amino-acid chain: tRNA(Ile)-lysidine synthase (459 aa).

38–43 is an ATP binding site; that stretch reads SGGMDS.

Belongs to the tRNA(Ile)-lysidine synthase family.

The protein resides in the cytoplasm. The catalysed reaction is cytidine(34) in tRNA(Ile2) + L-lysine + ATP = lysidine(34) in tRNA(Ile2) + AMP + diphosphate + H(+). Its function is as follows. Ligates lysine onto the cytidine present at position 34 of the AUA codon-specific tRNA(Ile) that contains the anticodon CAU, in an ATP-dependent manner. Cytidine is converted to lysidine, thus changing the amino acid specificity of the tRNA from methionine to isoleucine. The sequence is that of tRNA(Ile)-lysidine synthase from Acinetobacter baylyi (strain ATCC 33305 / BD413 / ADP1).